A 248-amino-acid chain; its full sequence is 2,3-bisphosphoglycerate-dependent phosphoglycerate mutase (248 aa).

Substrate contacts are provided by residues 8-15 (RHGESTWN), 21-22 (TG), arginine 60, 87-90 (ERHY), lysine 98, 114-115 (RR), and 183-184 (GN). Residue histidine 9 is the Tele-phosphohistidine intermediate of the active site. The active-site Proton donor/acceptor is glutamate 87.

It belongs to the phosphoglycerate mutase family. BPG-dependent PGAM subfamily. Homodimer.

The enzyme catalyses (2R)-2-phosphoglycerate = (2R)-3-phosphoglycerate. It functions in the pathway carbohydrate degradation; glycolysis; pyruvate from D-glyceraldehyde 3-phosphate: step 3/5. Functionally, catalyzes the interconversion of 2-phosphoglycerate and 3-phosphoglycerate. This Ralstonia nicotianae (strain ATCC BAA-1114 / GMI1000) (Ralstonia solanacearum) protein is 2,3-bisphosphoglycerate-dependent phosphoglycerate mutase.